Reading from the N-terminus, the 483-residue chain is tRNA (guanine(37)-N(1))-methyltransferase (483 aa).

Residues 1–24 are disordered; sequence MEEAATLQSLSISSSSPFPNNSSP. The span at 9–24 shows a compositional bias: low complexity; that stretch reads SLSISSSSPFPNNSSP. S-adenosyl-L-methionine is bound by residues His252, 290–291, and Asn379; that span reads DL.

The protein belongs to the class I-like SAM-binding methyltransferase superfamily. TRM5/TYW2 family. Monomer.

The protein resides in the mitochondrion matrix. Its subcellular location is the nucleus. It is found in the cytoplasm. The catalysed reaction is guanosine(37) in tRNA + S-adenosyl-L-methionine = N(1)-methylguanosine(37) in tRNA + S-adenosyl-L-homocysteine + H(+). Its function is as follows. Specifically methylates the N1 position of guanosine-37 in various cytoplasmic and mitochondrial tRNAs. Methylation is not dependent on the nature of the nucleoside 5' of the target nucleoside. This is the first step in the biosynthesis of wybutosine (yW), a modified base adjacent to the anticodon of tRNAs and required for accurate decoding. The protein is tRNA (guanine(37)-N(1))-methyltransferase of Ajellomyces capsulatus (strain G186AR / H82 / ATCC MYA-2454 / RMSCC 2432) (Darling's disease fungus).